Reading from the N-terminus, the 845-residue chain is P protein (845 aa).

The segment at 1–57 (MRLENREGRPTSGVLEMELPQASAPSRAGLGSLGLVGLDSSNHRPQQGGSKAGSRGP) is disordered. Over 1–183 (MRLENREGRP…HLSKLRCCVQ (183 aa)) the chain is Extracellular. A compositionally biased stretch (low complexity) spans 26–40 (SRAGLGSLGLVGLDS). A helical transmembrane segment spans residues 184–204 (WLKVSGLFVFVVLCSILFSLY). At 205–337 (PDQGKFWQLL…QYLRASIEAQ (133 aa)) the chain is on the cytoplasmic side. Residues 338 to 358 (VTIAAVILAGVYVLIIFEIVH) traverse the membrane as a helical segment. Over 359 to 360 (RT) the chain is Extracellular. A helical membrane pass occupies residues 361 to 381 (LAAMLGSLAALAALAVIGDRP). Residues 382–393 (TLTQVVEWIDFE) are Cytoplasmic-facing. A helical transmembrane segment spans residues 394-414 (TLALLFGMMILVAIFSETGFF). At 415–429 (DYCAVKAYQLSRGRV) the chain is on the extracellular side. Residues 430–450 (WAMIIMLCLIAAVLSAFLDNV) traverse the membrane as a helical segment. At 451-513 (TTALLFTPVT…ELRKMGLDFA (63 aa)) the chain is on the cytoplasmic side. A helical transmembrane segment spans residues 514-534 (GFTAHMFAGICFVLLFSFPLL). Residues 535–629 (RLLYWNRKLY…KKHRISDRTL (95 aa)) lie on the Extracellular side of the membrane. The helical transmembrane segment at 630 to 650 (LTKCVTVLGLVIFMFFLNSFV) threads the bilayer. Position 651 (proline 651) is a topological domain, cytoplasmic. A helical membrane pass occupies residues 652–672 (GVHLDLGWIAILGAIWLLILA). The Extracellular segment spans residues 673–687 (DIHDFEIILHRVEWA). The helical transmembrane segment at 688-708 (TLLFFAALFILMEALAHLHLI) threads the bilayer. Topologically, residues 709 to 730 (EYVGEQTALLIKMVPEDQRLAA) are cytoplasmic. A helical membrane pass occupies residues 731-751 (AIIVVVWVSAIASSLIDNIPF). Topologically, residues 752-773 (TATMIPVLLNLSRDPEISLPAP) are extracellular. A helical transmembrane segment spans residues 774–794 (PLMYALALGACLGGNGTLIGA). Residues 795-820 (SANVVCAGIAEQHGYGFSFMEFFRLG) lie on the Cytoplasmic side of the membrane. A helical membrane pass occupies residues 821–841 (FPMMVVSCMVGMCYLLVAHVV). Over 842–845 (MGWN) the chain is Extracellular.

It belongs to the CitM (TC 2.A.11) transporter family.

Its subcellular location is the melanosome membrane. The catalysed reaction is chloride(in) = chloride(out). Its function is as follows. Contributes to a melanosome-specific anion (chloride) current that modulates melanosomal pH for optimal tyrosinase activity required for melanogenesis and the melanosome maturation. One of the components of the mammalian pigmentary system. May serve as a key control point at which ethnic skin color variation is determined. Major determinant of brown and/or blue eye color. Seems to regulate the post-translational processing of tyrosinase, which catalyzes the limiting reaction in melanin synthesis. This is P protein (Oca2) from Sus scrofa (Pig).